The following is a 689-amino-acid chain: Putative pentatricopeptide repeat-containing protein At3g15130 (689 aa).

14 PPR repeats span residues 5–39, 40–70, 71–105, 106–140, 141–171, 172–206, 209–243, 246–276, 277–311, 312–342, 347–377, 378–412, 413–448, and 449–479; these read QRQN…GSGL, NLIT…MPER, NVVS…GIYP, NEFT…GFEM, MVEV…IVDR, SLIS…NIKE, DEFT…GFHC, SATI…IKEK, TMIS…NSQI, DSFA…AVKL, ETSV…MQLK, DVIS…NIEP, DEVC…GIKP, and RVEH…MPIK. Residues 484–559 form a type E motif region; sequence IWQTLLSLCR…EAGMSWVEIE (76 aa). The type E(+) motif stretch occupies residues 560-590; it reads REVHFFRSGEDSHPLTPVIQETLKEAERRLR. A type DYW motif region spans residues 592 to 689; that stretch reads ELGYVYGLKH…DGCCSCGDYW (98 aa).

Belongs to the PPR family. PCMP-H subfamily.

The chain is Putative pentatricopeptide repeat-containing protein At3g15130 (PCMP-H86) from Arabidopsis thaliana (Mouse-ear cress).